A 99-amino-acid polypeptide reads, in one-letter code: MGISKKSQVSRELDTDGKKFIFAKTSIRASLKPVKTKLIKPERESEDGICITPTARGAKTPECPAAPRKRPPVLKCQNNIRIEYFVPPSDFELVFIQRR.

The disordered stretch occupies residues 49 to 70 (ICITPTARGAKTPECPAAPRKR).

Expressed in root meristems after induction.

In terms of biological role, probable cyclin-dependent protein kinase (CDK) inhibitor that functions as a repressor of mitosis in the endoreduplication cell cycle. Acts as a potent cell cycle inhibitor, regulating a hydroxyurea-dependent checkpoint in leaves. This chain is Cyclin-dependent protein kinase inhibitor SMR7, found in Arabidopsis thaliana (Mouse-ear cress).